A 154-amino-acid chain; its full sequence is 6,7-dimethyl-8-ribityllumazine synthase (154 aa).

5-amino-6-(D-ribitylamino)uracil-binding positions include Phe-24, 56 to 58 (SFE), and 80 to 82 (AVV). 85–86 (ET) contacts (2S)-2-hydroxy-3-oxobutyl phosphate. His-88 (proton donor) is an active-site residue. Residue Phe-113 participates in 5-amino-6-(D-ribitylamino)uracil binding. Position 127 (Arg-127) interacts with (2S)-2-hydroxy-3-oxobutyl phosphate.

It belongs to the DMRL synthase family.

The enzyme catalyses (2S)-2-hydroxy-3-oxobutyl phosphate + 5-amino-6-(D-ribitylamino)uracil = 6,7-dimethyl-8-(1-D-ribityl)lumazine + phosphate + 2 H2O + H(+). The protein operates within cofactor biosynthesis; riboflavin biosynthesis; riboflavin from 2-hydroxy-3-oxobutyl phosphate and 5-amino-6-(D-ribitylamino)uracil: step 1/2. In terms of biological role, catalyzes the formation of 6,7-dimethyl-8-ribityllumazine by condensation of 5-amino-6-(D-ribitylamino)uracil with 3,4-dihydroxy-2-butanone 4-phosphate. This is the penultimate step in the biosynthesis of riboflavin. The chain is 6,7-dimethyl-8-ribityllumazine synthase from Thermococcus gammatolerans (strain DSM 15229 / JCM 11827 / EJ3).